The following is a 156-amino-acid chain: Transcription elongation factor GreA (156 aa).

This sequence belongs to the GreA/GreB family.

Functionally, necessary for efficient RNA polymerase transcription elongation past template-encoded arresting sites. The arresting sites in DNA have the property of trapping a certain fraction of elongating RNA polymerases that pass through, resulting in locked ternary complexes. Cleavage of the nascent transcript by cleavage factors such as GreA or GreB allows the resumption of elongation from the new 3'terminus. GreA releases sequences of 2 to 3 nucleotides. In Thermomicrobium roseum (strain ATCC 27502 / DSM 5159 / P-2), this protein is Transcription elongation factor GreA.